Reading from the N-terminus, the 635-residue chain is Early transcription factor 70 kDa subunit (635 aa).

Residues 32–185 (RSIIDENKSV…SNIISLMSDE (154 aa)) enclose the Helicase ATP-binding domain. Residue 45–52 (HIMGSGKT) participates in ATP binding. The DEXH box signature appears at 135 to 138 (DEAH). Residues 326-505 (KFKYFIGKIT…TLPFDIKKLL (180 aa)) enclose the Helicase C-terminal domain.

It belongs to the helicase family. VETF subfamily. As to quaternary structure, heterodimer of a 70 kDa and a 82 kDa subunit.

The protein localises to the virion. Functionally, acts with RNA polymerase to initiate transcription from early gene promoters. A DNA-dependent ATPase activity is associated with VETF. In Erythrocebus patas (Red guenon), this protein is Early transcription factor 70 kDa subunit (VETFS).